Here is a 402-residue protein sequence, read N- to C-terminus: Zinc finger protein 587B (402 aa).

A KRAB domain is found at 15 to 91 (VTFEDVAVKF…PVTGVSPKKA (77 aa)). The segment at 92 to 114 (HPCEMCGPILGDILHVADHQGTH) adopts a C2H2-type 1 zinc-finger fold. The C2H2-type 2; degenerate zinc finger occupies 120 to 142 (HRCEAWGNKLYDSGNFHQHQNEH). Glycyl lysine isopeptide (Lys-Gly) (interchain with G-Cter in SUMO2) cross-links involve residues K177, K200, and K253. 5 consecutive C2H2-type zinc fingers follow at residues 242-264 (YVCC…QRVH), 270-292 (YECG…QQFH), 298-320 (YGCE…QKVH), 326-348 (YECG…QRIH), and 354-383 (YKCG…WVDH). Residue K366 forms a Glycyl lysine isopeptide (Lys-Gly) (interchain with G-Cter in SUMO2) linkage.

It belongs to the krueppel C2H2-type zinc-finger protein family.

It is found in the nucleus. May be involved in transcriptional regulation. This Homo sapiens (Human) protein is Zinc finger protein 587B (ZNF587B).